A 240-amino-acid chain; its full sequence is 2-C-methyl-D-erythritol 2,4-cyclodiphosphate synthase, apicoplast (240 aa).

Positions 71 and 73 each coordinate a divalent metal cation. 4-CDP-2-C-methyl-D-erythritol 2-phosphate-binding positions include aspartate 71–histidine 73 and histidine 115–serine 116. An a divalent metal cation-binding site is contributed by histidine 123. Residues aspartate 137–glycine 139, phenylalanine 142–aspartate 146, alanine 181–serine 187, and glycine 212–threonine 214 contribute to the 4-CDP-2-C-methyl-D-erythritol 2-phosphate site.

Belongs to the IspF family. In terms of assembly, homotrimer. The cofactor is a divalent metal cation.

It is found in the plastid. The protein resides in the apicoplast. It catalyses the reaction 4-CDP-2-C-methyl-D-erythritol 2-phosphate = 2-C-methyl-D-erythritol 2,4-cyclic diphosphate + CMP. Its pathway is isoprenoid biosynthesis; isopentenyl diphosphate biosynthesis via DXP pathway; isopentenyl diphosphate from 1-deoxy-D-xylulose 5-phosphate: step 4/6. In terms of biological role, in the mevalonate-independent isoprenoid biosynthetic pathway, converts 4-diphosphocytidyl-2C-methyl-D-erythritol 2-phosphate into 2C-methyl-D-erythritol 2,4-cyclodiphosphate and CMP. The chain is 2-C-methyl-D-erythritol 2,4-cyclodiphosphate synthase, apicoplast from Plasmodium falciparum (isolate 3D7).